The primary structure comprises 319 residues: Glucokinase (319 aa).

8 to 13 is a binding site for ATP; that stretch reads GDIGGT.

It belongs to the bacterial glucokinase family.

Its subcellular location is the cytoplasm. The enzyme catalyses D-glucose + ATP = D-glucose 6-phosphate + ADP + H(+). The sequence is that of Glucokinase from Chromohalobacter salexigens (strain ATCC BAA-138 / DSM 3043 / CIP 106854 / NCIMB 13768 / 1H11).